The sequence spans 434 residues: Putative nuclease OPG089 (434 aa).

Residues aspartate 33, aspartate 74, glutamate 168, aspartate 170, aspartate 196, and aspartate 198 each contribute to the Mg(2+) site.

This sequence belongs to the XPG/RAD2 endonuclease family. FEN1 subfamily. It depends on Mg(2+) as a cofactor.

It is found in the virion. Its function is as follows. Putative nuclease that seems to be required for double-strand break repair, homologous recombination, and production of full-length viral genomic DNA. The sequence is that of Putative nuclease OPG089 (OPG089) from Homo sapiens (Human).